Reading from the N-terminus, the 311-residue chain is p-hydroxybenzoic acid efflux pump subunit AaeA (311 aa).

The chain crosses the membrane as a helical span at residues 11–31 (VGITVLVVVLAVIAIFNVWAF).

It belongs to the membrane fusion protein (MFP) (TC 8.A.1) family.

Its subcellular location is the cell inner membrane. Forms an efflux pump with AaeB. This chain is p-hydroxybenzoic acid efflux pump subunit AaeA, found in Yersinia pseudotuberculosis serotype O:1b (strain IP 31758).